The sequence spans 153 residues: MNVGTAHSEVNPNTRVMNSRGIWLSYVLGIGLLHIILLSIPFVSVPVVWTLTNLIHNMCMYIFLHTVKGTPFETPDQGKARLLTHWEQMDYGVQFTASRKFLTITPIILYFLTSFYTKYDRVHFVINTISLLTVLIPKLPQFHGVRLFGINKY.

At 1–21 the chain is on the cytoplasmic side; that stretch reads MNVGTAHSEVNPNTRVMNSRG. The next 2 membrane-spanning stretches (helical) occupy residues 22–42 and 43–63; these read IWLS…SIPF and VSVP…MYIF. The Cytoplasmic portion of the chain corresponds to 64–94; the sequence is LHTVKGTPFETPDQGKARLLTHWEQMDYGVQ. The chain crosses the membrane as a helical span at residues 95-117; the sequence is FTASRKFLTITPIILYFLTSFYT. Residues 118 to 121 lie on the Extracellular side of the membrane; it reads KYDR. The helical transmembrane segment at 122–142 threads the bilayer; it reads VHFVINTISLLTVLIPKLPQF. At Pro137 the chain carries Hydroxyproline. The Cytoplasmic segment spans residues 143–153; sequence HGVRLFGINKY.

This sequence belongs to the ORM family. In terms of assembly, ceramide-sensitive subunit of the serine palmitoyltransferase (SPT) complex, which is also composed of SPTLC1, SPTLC2/3 and SPTSSA/B. When hydroxylated at Pro-137, ubiquitinated via 'Lys-48'-linkage, leading to proteasomal degradation. In endothelial cells, ORMDL3 proteasomal degradation is controlled by the sphingosine 1-phosphate receptor signaling pathway.

The protein localises to the endoplasmic reticulum membrane. In terms of biological role, plays an essential role in the homeostatic regulation of sphingolipid de novo biosynthesis by modulating the activity of the serine palmitoyltransferase (SPT) in response to ceramide levels. When complexed to SPT, the binding of ceramides to its N-terminus stabilizes a conformation that block SPT substrate entry, hence preventing SPT catalytic activity. Through this mechanism, maintains ceramide levels at sufficient concentrations for the production of complex sphingolipids, but which prevents the accumulation of ceramides to levels that trigger apoptosis. This Danio rerio (Zebrafish) protein is ORM1-like protein 3 (ormdl3).